The primary structure comprises 135 residues: Protein E6 (135 aa).

Zinc fingers lie at residues 11–47 (CIWC…CTSC) and 83–119 (CMYC…CYLC).

This sequence belongs to the papillomaviridae E6 protein family. As to quaternary structure, forms homodimers. Interacts with ubiquitin-protein ligase UBE3A/E6-AP; this interaction stimulates UBE3A ubiquitin activity. Interacts with host BAK1.

The protein resides in the host cytoplasm. It localises to the host nucleus. In terms of biological role, plays a major role in the induction and maintenance of cellular transformation. E6 associates with host UBE3A/E6-AP ubiquitin-protein ligase and modulates its activity. Protects host keratinocytes from apoptosis by mediating the degradation of host BAK1. May also inhibit host immune response. The chain is Protein E6 from Cervus elaphus (Red deer).